Here is a 160-residue protein sequence, read N- to C-terminus: SsrA-binding protein (160 aa).

It belongs to the SmpB family.

The protein resides in the cytoplasm. Required for rescue of stalled ribosomes mediated by trans-translation. Binds to transfer-messenger RNA (tmRNA), required for stable association of tmRNA with ribosomes. tmRNA and SmpB together mimic tRNA shape, replacing the anticodon stem-loop with SmpB. tmRNA is encoded by the ssrA gene; the 2 termini fold to resemble tRNA(Ala) and it encodes a 'tag peptide', a short internal open reading frame. During trans-translation Ala-aminoacylated tmRNA acts like a tRNA, entering the A-site of stalled ribosomes, displacing the stalled mRNA. The ribosome then switches to translate the ORF on the tmRNA; the nascent peptide is terminated with the 'tag peptide' encoded by the tmRNA and targeted for degradation. The ribosome is freed to recommence translation, which seems to be the essential function of trans-translation. This is SsrA-binding protein from Histophilus somni (strain 129Pt) (Haemophilus somnus).